The primary structure comprises 196 residues: Molybdenum cofactor guanylyltransferase (196 aa).

GTP-binding positions include 10–12 (LAG), lysine 23, asparagine 51, aspartate 69, and aspartate 99. Aspartate 99 lines the Mg(2+) pocket.

This sequence belongs to the MobA family. As to quaternary structure, monomer. Requires Mg(2+) as cofactor.

Its subcellular location is the cytoplasm. It catalyses the reaction Mo-molybdopterin + GTP + H(+) = Mo-molybdopterin guanine dinucleotide + diphosphate. Transfers a GMP moiety from GTP to Mo-molybdopterin (Mo-MPT) cofactor (Moco or molybdenum cofactor) to form Mo-molybdopterin guanine dinucleotide (Mo-MGD) cofactor. The sequence is that of Molybdenum cofactor guanylyltransferase from Shewanella frigidimarina (strain NCIMB 400).